A 199-amino-acid chain; its full sequence is Recombination protein RecR (199 aa).

The C4-type zinc-finger motif lies at 58–73 (CKKCFNLTSEDECEIC). Positions 81-175 (KLICVVAETK…KVTRIAYGLP (95 aa)) constitute a Toprim domain.

The protein belongs to the RecR family.

Its function is as follows. May play a role in DNA repair. It seems to be involved in an RecBC-independent recombinational process of DNA repair. It may act with RecF and RecO. This is Recombination protein RecR from Prochlorococcus marinus (strain MIT 9301).